The primary structure comprises 368 residues: Probable dual-specificity RNA methyltransferase RlmN (368 aa).

The active-site Proton acceptor is the E100. One can recognise a Radical SAM core domain in the interval 106-344 (QHYGLSVCVT…CVVRQEHGTD (239 aa)). Cysteines 113 and 349 form a disulfide. The [4Fe-4S] cluster site is built by C120, C124, and C127. S-adenosyl-L-methionine-binding positions include 172–173 (GE), S204, 227–229 (SLH), and N305. Catalysis depends on C349, which acts as the S-methylcysteine intermediate.

The protein belongs to the radical SAM superfamily. RlmN family. [4Fe-4S] cluster serves as cofactor.

The protein localises to the cytoplasm. The enzyme catalyses adenosine(2503) in 23S rRNA + 2 reduced [2Fe-2S]-[ferredoxin] + 2 S-adenosyl-L-methionine = 2-methyladenosine(2503) in 23S rRNA + 5'-deoxyadenosine + L-methionine + 2 oxidized [2Fe-2S]-[ferredoxin] + S-adenosyl-L-homocysteine. The catalysed reaction is adenosine(37) in tRNA + 2 reduced [2Fe-2S]-[ferredoxin] + 2 S-adenosyl-L-methionine = 2-methyladenosine(37) in tRNA + 5'-deoxyadenosine + L-methionine + 2 oxidized [2Fe-2S]-[ferredoxin] + S-adenosyl-L-homocysteine. Specifically methylates position 2 of adenine 2503 in 23S rRNA and position 2 of adenine 37 in tRNAs. The protein is Probable dual-specificity RNA methyltransferase RlmN of Streptococcus agalactiae serotype V (strain ATCC BAA-611 / 2603 V/R).